Consider the following 61-residue polypeptide: Small ribosomal subunit protein uS14B (61 aa).

Residues C24, C27, C40, and C43 each coordinate Zn(2+).

It belongs to the universal ribosomal protein uS14 family. Zinc-binding uS14 subfamily. As to quaternary structure, part of the 30S ribosomal subunit. Contacts proteins S3 and S10. The cofactor is Zn(2+).

Binds 16S rRNA, required for the assembly of 30S particles and may also be responsible for determining the conformation of the 16S rRNA at the A site. This is Small ribosomal subunit protein uS14B from Myxococcus xanthus (strain DK1622).